The following is a 2701-amino-acid chain: Centromere-associated protein E (2701 aa).

The region spanning 6–329 (AVAVCVRVRP…LQFASTAKYM (324 aa)) is the Kinesin motor domain. 86–93 (GQTASGKT) lines the ATP pocket. Residues 336–2590 (NEVSTDEALL…SNEVKTWKER (2255 aa)) adopt a coiled-coil conformation. Residues Ser611 and Ser2083 each carry the phosphoserine modification. The kinetochore-binding domain stretch occupies residues 2126–2476 (KEIEFQKELS…IDLEKMKNAK (351 aa)). Positions 2355-2376 (SGAQVNPTTQDNKNPHVTSRAT) are disordered. Ser2389 carries the post-translational modification Phosphoserine. A compositionally biased stretch (polar residues) spans 2508–2527 (QAQDTSVISEHTDPQPSNKP). Disordered regions lie at residues 2508–2533 (QAQD…CGGG) and 2588–2701 (KERT…CKTQ). Positions 2510-2698 (QDTSVISEHT…ASSGKDVPEC (189 aa)) are globular autoinhibitory domain. Over residues 2588–2600 (KERTLKREAHKQV) the composition is skewed to basic and acidic residues. Residues 2601 to 2625 (TCENSPKSPKVTGTASKKKQITPSQ) show a composition bias toward polar residues. Basic and acidic residues predominate over residues 2626-2640 (CKERNLQDPVPKESP). 3 positions are modified to phosphoserine: Ser2639, Ser2647, and Ser2651. Cys2698 carries the cysteine methyl ester modification. Cys2698 is lipidated: S-farnesyl cysteine. Residues 2699–2701 (KTQ) constitute a propeptide, removed in mature form.

Belongs to the TRAFAC class myosin-kinesin ATPase superfamily. Kinesin family. Monomer. Interacts with CENPF. Interacts with BUB1B. Interacts with SEPT7. Interacts with KIF18A. Interacts with PRC1. Interacts with NUF2; this interaction determines kinetochore localization. Interacts with SKAP; this interaction greatly favors SKAP binding to microtubules. Interacts with TRAPPC12. Interacts with CTCF. Post-translationally, the C-terminal inhibitory domain is phosphorylated. Phosphorylation relieves autoinhibition of the kinetochore motor. In terms of processing, sumoylated with SUMO2 and SUMO3. The sumoylation mediates the association to the kinetochore.

It localises to the chromosome. It is found in the centromere. The protein resides in the kinetochore. The protein localises to the cytoplasm. Its subcellular location is the cytoskeleton. It localises to the spindle. Its function is as follows. Microtubule plus-end-directed kinetochore motor which plays an important role in chromosome congression, microtubule-kinetochore conjugation and spindle assembly checkpoint activation. Drives chromosome congression (alignment of chromosomes at the spindle equator resulting in the formation of the metaphase plate) by mediating the lateral sliding of polar chromosomes along spindle microtubules towards the spindle equator and by aiding the establishment and maintenance of connections between kinetochores and spindle microtubules. The transport of pole-proximal chromosomes towards the spindle equator is favored by microtubule tracks that are detyrosinated. Acts as a processive bi-directional tracker of dynamic microtubule tips; after chromosomes have congressed, continues to play an active role at kinetochores, enhancing their links with dynamic microtubule ends. Suppresses chromosome congression in NDC80-depleted cells and contributes positively to congression only when microtubules are stabilized. Plays an important role in the formation of stable attachments between kinetochores and spindle microtubules The stabilization of kinetochore-microtubule attachment also requires CENPE-dependent localization of other proteins to the kinetochore including BUB1B, MAD1 and MAD2. Plays a role in spindle assembly checkpoint activation (SAC) via its interaction with BUB1B resulting in the activation of its kinase activity, which is important for activating SAC. Necessary for the mitotic checkpoint signal at individual kinetochores to prevent aneuploidy due to single chromosome loss. The sequence is that of Centromere-associated protein E (CENPE) from Homo sapiens (Human).